A 464-amino-acid chain; its full sequence is Argininosuccinate lyase (464 aa).

Belongs to the lyase 1 family. Argininosuccinate lyase subfamily.

It is found in the cytoplasm. The enzyme catalyses 2-(N(omega)-L-arginino)succinate = fumarate + L-arginine. Its pathway is amino-acid biosynthesis; L-arginine biosynthesis; L-arginine from L-ornithine and carbamoyl phosphate: step 3/3. The polypeptide is Argininosuccinate lyase (Chlorobium phaeobacteroides (strain DSM 266 / SMG 266 / 2430)).